The following is a 547-amino-acid chain: Inositol 1,4,5-trisphosphate receptor-interacting protein-like 1 (547 aa).

Positions 1–22 are cleaved as a signal peptide; that stretch reads MAVISLMFLAVMYVVHHPLMVS. The Extracellular portion of the chain corresponds to 23-96; sequence DRMDLDTLAR…PFQAGGQDGG (74 aa). The stretch at 28-66 forms a coiled coil; sequence DTLARSRQLEKRMSEEMRQLEMEFEERSRAAEQKQKVEN. A helical transmembrane segment spans residues 97-117; that stretch reads PLGWILGNLWNAGLFCLFLIF. Over 118-547 the chain is Cytoplasmic; the sequence is ELLRQSMQHE…LPCSPVAGGL (430 aa).

This sequence belongs to the ITPRIP family.

It localises to the cell membrane. Its function is as follows. Functions as a ligand of CD3E, inhibiting TCR-CD3 complex signaling to regulate T cell activation. Induces stable CD3E-NCK1 binding, thereby preventing the CD3E-ZAP70 interaction and subsequently inhibiting the activation of the downstream ERK-NFkB signaling cascade and calcium influx. This is Inositol 1,4,5-trisphosphate receptor-interacting protein-like 1 (Itpripl1) from Mus musculus (Mouse).